A 380-amino-acid chain; its full sequence is Cytochrome b (380 aa).

4 helical membrane-spanning segments follow: residues 34–54, 78–99, 114–134, and 179–199; these read SGSLLGLCLVVQILTGIFLAM, WFLRYVHANGVSLFFICMYCHI, WNVGVILFLVTILTAFMGYVL, and FFPFHFLFPFIIAALAVIHLV. Residues histidine 84 and histidine 98 each coordinate heme b. Heme b contacts are provided by histidine 183 and histidine 197. Residue histidine 202 participates in a ubiquinone binding. Transmembrane regions (helical) follow at residues 227 to 247, 289 to 309, 321 to 341, and 348 to 369; these read TKDTVGFILLVAALFSLALLF, LGGVIALVAAILVLFLMPLLN, LSQAAFWLLVAHLFILTWIGS, and YVLLGQVASVLYFSLFIFGFPI.

It belongs to the cytochrome b family. The main subunits of complex b-c1 are: cytochrome b, cytochrome c1 and the Rieske protein. Heme b is required as a cofactor.

It localises to the mitochondrion inner membrane. Functionally, component of the ubiquinol-cytochrome c reductase complex (complex III or cytochrome b-c1 complex) that is part of the mitochondrial respiratory chain. The b-c1 complex mediates electron transfer from ubiquinol to cytochrome c. Contributes to the generation of a proton gradient across the mitochondrial membrane that is then used for ATP synthesis. This chain is Cytochrome b (MT-CYB), found in Strongylocentrotus purpuratus (Purple sea urchin).